A 540-amino-acid polypeptide reads, in one-letter code: CUB domain-containing protein 2 (540 aa).

The first 24 residues, 1 to 24 (MLAELGACLLLAMVLLDSDPGTQA), serve as a signal peptide directing secretion. Residues 25–516 (MEGVKCGGVL…GTMVTQDTSD (492 aa)) are Extracellular-facing. 6 disulfides stabilise this stretch: C30–C56, C83–C106, C145–C171, C198–C218, C257–C283, and C314–C336. CUB domains follow at residues 30 to 143 (CGGV…YQKD), 145 to 255 (CGGV…YFSG), and 257 to 373 (CQEV…YIGV). An N-linked (GlcNAc...) asparagine glycan is attached at N40. A glycan (N-linked (GlcNAc...) asparagine) is linked at N267. Residues N377, N435, and N436 are each glycosylated (N-linked (GlcNAc...) asparagine). A helical transmembrane segment spans residues 517 to 537 (IVFLGLCILAGVLMIIAIVVL). At 538 to 540 (MLL) the chain is on the cytoplasmic side.

Its subcellular location is the membrane. The polypeptide is CUB domain-containing protein 2 (Cdcp2) (Mus musculus (Mouse)).